The sequence spans 430 residues: Alpha-humulene synthase asR6 (430 aa).

Belongs to the terpene synthase family. Alpha-humulene synthase eupE subfamily. It depends on Mg(2+) as a cofactor.

The enzyme catalyses (2E,6E)-farnesyl diphosphate = alpha-humulene + diphosphate. It functions in the pathway secondary metabolite biosynthesis; terpenoid biosynthesis. Its function is as follows. Alpha-humulene synthase; part of the gene cluster that mediates the biosynthesis of xenovulene A, an unusual meroterpenoid that has potent inhibitory effects on the human gamma-aminobutyrate A (GABAA) benzodiazepine receptor. The first step of xenovulene A biosynthesis is the biosynthesis of 3-methylorcinaldehyde performed by the non-reducing polyketide synthase aspks1. The salicylate hydroxylase asL1 then catalyzes the oxidative dearomatization of 3-methylorcinaldehyde to yield a dearomatized hydroxycyclohexadione. The 2-oxoglutarate-dependent dioxygenase asL3 further catalyzes the oxidative ring expansion to provide the first tropolone metabolite. The cytochrome P450 monooxygenase asR2 allows the synthesis of tropolone hemiacetal. In parallel, a previously unrecognised class of terpene cyclase, asR6, produces alpha-humulene from farnesylpyrophosphate (FPP). The putative Diels-Alderase asR5 probably catalyzes the formation of the tropolone-humulene skeleton by linking humulene and the polyketide moiety. Oxidative-ring contractions catalyzed by asL4 and asL6 then processively remove carbon atoms from the polyketide to yield xenovulene A. This Sarocladium schorii (Acremonium strictum (strain IMI 501407)) protein is Alpha-humulene synthase asR6.